The following is a 623-amino-acid chain: Protein EDS1L (623 aa).

Alanine 2 is modified (N-acetylalanine). Catalysis depends on serine 123, which acts as the Nucleophile. Residues aspartate 187 and histidine 317 each act as charge relay system in the active site.

As to quaternary structure, homodimer. Interacts with RPS4, RPS6, SNC1, SRFR1, AvrRps4 and HopA1. Interacts with PAD4 (via N-terminus). Interacts with SAG101. EDS1-SAG101 and EDS1-PAD4 form separate complexes in pathogen-unchallenged cells.

The protein resides in the nucleus. It localises to the cytoplasm. It is found in the microsome. Positive regulator of basal resistance and of effector-triggered immunity specifically mediated by TIR-NB-LRR resistance proteins. Disruption by bacterial effector of EDS1-TIR-NB-LRR resistance protein interactions constitutes the first step in resistance activation. Triggers early plant defenses and hypersensitive response independently of PAD4, and then recruits PAD4 to potentiate plant defenses through the accumulation of salicylic acid. Nuclear localization is essential for basal and TIR-NB-LRR-conditioned immunity and for reprogramming defense gene expression, while cytoplasmic EDS1 is required to induce a complete immune response. Heterodimerization with PAD4 or SGA101 is necessary for TNL-mediated effector-triggered immunity. Contributes to nonhost resistance against E.amylovora. Has no direct lipase activity. In Arabidopsis thaliana (Mouse-ear cress), this protein is Protein EDS1L.